We begin with the raw amino-acid sequence, 1700 residues long: Ras-responsive element-binding protein 1 (1700 aa).

Residues 31–63 (TENGGSPQGIKSPMKPPGPNRIGRRNQETKEEK) form a disordered region. S36 and S42 each carry phosphoserine. C2H2-type zinc fingers lie at residues 66 to 88 (YNCPLCEKICTTQHQLTMHIRQH), 97 to 119 (HACSICGKSLSSASSLDRHMLVH), and 125 to 147 (YKCTVCGQSFTTNGNMHRHMKIH). Residues 146–195 (IHEKDTNSTTAAAPPSPLKRRRLSSKRKLSHDAESEDPGPAKKMVEDGQS) form a disordered region. At S161 the chain carries Phosphoserine. Residues 163-174 (LKRRRLSSKRKL) show a composition bias toward basic residues. 2 positions are modified to phosphoserine: S175 and S180. A compositionally biased stretch (basic and acidic residues) spans 184–195 (GPAKKMVEDGQS). The segment at 206-228 (FHCPVCFKEFVCKYELETHMETH) adopts a C2H2-type 4 zinc-finger fold. A Phosphoserine modification is found at S229. 2 C2H2-type zinc fingers span residues 233–256 (LRCDICCVTFRTHRGLLRHNALVH) and 314–336 (FVCDTCDKAFPMLSSLILHRQSH). Glycyl lysine isopeptide (Lys-Gly) (interchain with G-Cter in SUMO2) cross-links involve residues K433, K500, K549, K564, K591, and K611. K613 is covalently cross-linked (Glycyl lysine isopeptide (Lys-Gly) (interchain with G-Cter in SUMO1); alternate). K613 is covalently cross-linked (Glycyl lysine isopeptide (Lys-Gly) (interchain with G-Cter in SUMO2); alternate). Residue K622 forms a Glycyl lysine isopeptide (Lys-Gly) (interchain with G-Cter in SUMO2) linkage. 5 consecutive C2H2-type zinc fingers follow at residues 641-663 (YPCRFCNQVFAFSGVLRAHVRSH), 669-691 (YQCNICDYIAADKAALIRHIRTH), 697-720 (YICKICHYPFTVKANCERHLRKKH), 751-782 (TVCRLCGEDLKHYRALRIHMRTHCSRGLGGCH), and 788-813 (FECKECNAPFVAKRNCIHHILKQHLH). Residues K855, K883, and K911 each participate in a glycyl lysine isopeptide (Lys-Gly) (interchain with G-Cter in SUMO2) cross-link. Disordered stretches follow at residues 939–991 (IPKS…SLET) and 1092–1177 (ADPG…AVDL). Basic and acidic residues predominate over residues 944-961 (KKGDKDTVVPSDAKKPEP). S970 is subject to Phosphoserine. A compositionally biased stretch (polar residues) spans 1097 to 1111 (SITSSNTVATDSPGS). S1125, S1137, and S1138 each carry phosphoserine. Low complexity predominate over residues 1137-1146 (SSPEEALPTE). The segment covering 1155-1165 (SRKRGRKRGLR) has biased composition (basic residues). A phosphoserine mark is found at S1172, S1179, S1180, and S1230. Disordered stretches follow at residues 1195–1235 (TNKF…AEDR), 1273–1368 (HTDS…QSLD), 1383–1521 (SEAG…RKKV), and 1564–1670 (VRHQ…SPAA). The segment at 1251–1273 (INCPHCPRVFPWASSLQRHMLTH) adopts a C2H2-type 12 zinc-finger fold. Low complexity predominate over residues 1273 to 1285 (HTDSQSDTDTLTT). Acidic residues predominate over residues 1327–1346 (SEEEEEKETEENPEPEEECR). The C2H2-type 13 zinc-finger motif lies at 1400–1422 (HACDTCGKNFKFLGTLSRHKKAH). S1450 and S1452 each carry phosphoserine. The segment covering 1492 to 1507 (TAEKRGDGDKRPKTDS) has biased composition (basic and acidic residues). C2H2-type zinc fingers lie at residues 1520–1542 (KVCSVCNKRFWSLQDLTRHMRSH) and 1548–1570 (YKCQTCERTFTLKHSLVRHQRIH). A compositionally biased stretch (basic residues) spans 1564–1580 (VRHQRIHQKARHSKHHG). S1593 and S1606 each carry phosphoserine. Positions 1645–1660 (AEQAAEPSAPKEQASP) are enriched in low complexity. Phosphoserine is present on S1667.

This sequence belongs to the krueppel C2H2-type zinc-finger protein family. Interacts with NEUROD1. Interacts with AR. As to expression, expressed in splenic B-cells.

It is found in the nucleus speckle. Functionally, transcription factor that binds specifically to the RAS-responsive elements (RRE) of gene promoters. Represses the angiotensinogen gene. Negatively regulates the transcriptional activity of AR. Potentiates the transcriptional activity of NEUROD1. Binds specifically to the allelic variant of the CDKN2A promoter present in Balb/c mice, which leads to a down-regulation of CDKN2A expression in this strain, and, as a consequence, to an elevated susceptibility to pristane-induced tumors. Promotes brown adipocyte differentiation. May be involved in Ras/Raf-mediated cell differentiation by enhancing calcitonin expression. The chain is Ras-responsive element-binding protein 1 (Rreb1) from Mus musculus (Mouse).